Here is a 329-residue protein sequence, read N- to C-terminus: Synaptonemal complex central element protein 1 (329 aa).

Residues 1–33 (MATRPQPLSVEPEGSADLLHGPEGARGRRGSTQ) are disordered. Coiled coils occupy residues 28-168 (RRGS…ETLM) and 194-294 (KEQL…ILAQ). The disordered stretch occupies residues 295 to 329 (IQSTQKEEDSSWRTASPKPLEAHKETVQERPSSRT). The span at 314 to 329 (LEAHKETVQERPSSRT) shows a compositional bias: basic and acidic residues.

This sequence belongs to the SYCE family. Homodimer. Found in a complex with SYCP1 and SYCE2. Interacts with SYCP1, SYCE2 and SYCE3. Interacts with SIX6OS1.

The protein localises to the nucleus. Its subcellular location is the chromosome. Major component of the transverse central element of synaptonemal complexes (SCS), formed between homologous chromosomes during meiotic prophase. Requires SYCP1 in order to be incorporated into the central element. May have a role in the synaptonemal complex assembly, stabilization and recombination. This is Synaptonemal complex central element protein 1 (Syce1) from Rattus norvegicus (Rat).